Reading from the N-terminus, the 67-residue chain is Putative ATP synthase subunit epsilon, mitochondrial (67 aa).

Belongs to the eukaryotic ATPase epsilon family. In terms of assembly, F-type ATPases have 2 components, CF(1) - the catalytic core - and CF(0) - the membrane proton channel. CF(1) has five subunits: alpha(3), beta(3), gamma(1), delta(1), epsilon(1). CF(0) seems to have nine subunits: a, b, c, d, e, f, g, F6 and 8 (or A6L).

The protein localises to the mitochondrion. Its subcellular location is the mitochondrion inner membrane. Mitochondrial membrane ATP synthase (F(1)F(0) ATP synthase or Complex V) produces ATP from ADP in the presence of a proton gradient across the membrane which is generated by electron transport complexes of the respiratory chain. F-type ATPases consist of two structural domains, F(1) - containing the extramembraneous catalytic core, and F(0) - containing the membrane proton channel, linked together by a central stalk and a peripheral stalk. During catalysis, ATP synthesis in the catalytic domain of F(1) is coupled via a rotary mechanism of the central stalk subunits to proton translocation. Part of the complex F(1) domain and of the central stalk which is part of the complex rotary element. Rotation of the central stalk against the surrounding alpha(3)beta(3) subunits leads to hydrolysis of ATP in three separate catalytic sites on the beta subunits. In Schizosaccharomyces pombe (strain 972 / ATCC 24843) (Fission yeast), this protein is Putative ATP synthase subunit epsilon, mitochondrial (atp15).